Here is a 113-residue protein sequence, read N- to C-terminus: Large ribosomal subunit protein uL22 (113 aa).

This sequence belongs to the universal ribosomal protein uL22 family. In terms of assembly, part of the 50S ribosomal subunit.

In terms of biological role, this protein binds specifically to 23S rRNA; its binding is stimulated by other ribosomal proteins, e.g. L4, L17, and L20. It is important during the early stages of 50S assembly. It makes multiple contacts with different domains of the 23S rRNA in the assembled 50S subunit and ribosome. Functionally, the globular domain of the protein is located near the polypeptide exit tunnel on the outside of the subunit, while an extended beta-hairpin is found that lines the wall of the exit tunnel in the center of the 70S ribosome. This is Large ribosomal subunit protein uL22 from Desulforudis audaxviator (strain MP104C).